A 291-amino-acid chain; its full sequence is BTB/POZ domain-containing protein 19 (291 aa).

The BTB domain maps to Ser29–Arg98. The BACK domain occupies Cys134–Ser234.

The protein is BTB/POZ domain-containing protein 19 (BTBD19) of Bos taurus (Bovine).